A 404-amino-acid chain; its full sequence is AT-hook motif nuclear-localized protein 6 (404 aa).

The segment at 40–112 (TTVVTPLPPP…TPISSSIPLS (73 aa)) is disordered. Residues 45-55 (PLPPPPAPSSA) are compositionally biased toward pro residues. The segment covering 56-70 (PVPTTVTPGSATAST) has biased composition (low complexity). A Bipartite nuclear localization signal motif is present at residues 76 to 84 (KKKRGRPRK). Positions 76 to 88 (KKKRGRPRKYAPD) form a DNA-binding region, a.T hook. The span at 98-112 (PTLSPTPISSSIPLS) shows a compositional bias: low complexity. Residues 157–299 (GANFTTHQFT…RVMEAFAPPQ (143 aa)) enclose the PPC domain. Residues 365–404 (AYHGYGNMNTGTTHKEEHEDEDGGDDDDDSGDTRSQSHSG) are disordered. The span at 382 to 394 (HEDEDGGDDDDDS) shows a compositional bias: acidic residues.

The protein localises to the nucleus. Its function is as follows. Transcription factor that specifically binds AT-rich DNA sequences related to the nuclear matrix attachment regions (MARs). The protein is AT-hook motif nuclear-localized protein 6 of Arabidopsis thaliana (Mouse-ear cress).